Here is a 652-residue protein sequence, read N- to C-terminus: ATP-dependent zinc metalloprotease FtsH (652 aa).

Topologically, residues 1–11 (MKKQNNGLIKN) are cytoplasmic. The chain crosses the membrane as a helical span at residues 12–32 (PFLWLLFIFFLVTGFQYFYSG). The Extracellular segment spans residues 33–131 (NNSGGSQQIN…EVTVKHESSS (99 aa)). A helical membrane pass occupies residues 132–152 (GIWINLLVSIVPFGILFFFLF). The Cytoplasmic segment spans residues 153–652 (SMMGNMGGGN…EVKSKMNDEK (500 aa)). Residue 227–234 (GPPGTGKT) coordinates ATP. Zn(2+) is bound at residue histidine 449. The active site involves glutamate 450. Residues histidine 453 and aspartate 525 each coordinate Zn(2+). The tract at residues 628–652 (MPEAVEEESHALSYDEVKSKMNDEK) is disordered. The segment covering 634–652 (EESHALSYDEVKSKMNDEK) has biased composition (basic and acidic residues).

It in the central section; belongs to the AAA ATPase family. In the C-terminal section; belongs to the peptidase M41 family. Homohexamer. Requires Zn(2+) as cofactor.

Its subcellular location is the cell membrane. Its function is as follows. Acts as a processive, ATP-dependent zinc metallopeptidase for both cytoplasmic and membrane proteins. Plays a role in the quality control of integral membrane proteins. The sequence is that of ATP-dependent zinc metalloprotease FtsH from Streptococcus pneumoniae (strain ATCC BAA-255 / R6).